A 467-amino-acid chain; its full sequence is NADH-ubiquinone oxidoreductase chain 4 (467 aa).

The next 13 membrane-spanning stretches (helical) occupy residues 21 to 40 (SMSKHMFTVASMLMAMPTLY), 54 to 74 (MADVLMLLTMYMLPLSMISNW), 79 to 99 (STLYFELVLNLGMMLLINFMC), 105 to 125 (FYMYFEASLAPLFMLMGLYGA), 135 to 155 (VLMYTLFSSLFMLLAMALYEV), 168 to 188 (LVLSLDLQCMLFLAMSMGIAV), 207 to 227 (PLAGSMLLAGMILKLAVFAMI), 239 to 259 (VTYTPFVYVMCVMTMMYTSII), 266 to 286 (LKVIIAYSSISHMAVCMLGML), 297 to 317 (LVLCIAHGFVSPGLFMMVGGM), 330 to 350 (FQGLISYMPYLSVYFMMLSFC), 367 to 387 (LTGAINRAPVLGAMAALSVLL), and 420 to 440 (VLMITLIVPTMFLGFFPSWVM).

It belongs to the complex I subunit 4 family.

It localises to the mitochondrion membrane. It carries out the reaction a ubiquinone + NADH + 5 H(+)(in) = a ubiquinol + NAD(+) + 4 H(+)(out). In terms of biological role, core subunit of the mitochondrial membrane respiratory chain NADH dehydrogenase (Complex I) that is believed to belong to the minimal assembly required for catalysis. Complex I functions in the transfer of electrons from NADH to the respiratory chain. The immediate electron acceptor for the enzyme is believed to be ubiquinone. This Debaryomyces hansenii (strain ATCC 36239 / CBS 767 / BCRC 21394 / JCM 1990 / NBRC 0083 / IGC 2968) (Yeast) protein is NADH-ubiquinone oxidoreductase chain 4 (ND4).